The primary structure comprises 1042 residues: Signal-induced proliferation-associated protein 1 (1042 aa).

2 disordered regions span residues 1–87 and 132–153; these read MPMW…TSTR and SQGM…EDQA. At threonine 64 the chain carries Phosphothreonine. Phosphoserine is present on serine 67. The segment covering 134-146 has biased composition (polar residues); it reads GMGSHSEASSGTL. Residues serine 182, serine 304, and serine 314 each carry the phosphoserine modification. Positions 321–539 constitute a Rap-GAP domain; that stretch reads LLTLDEQVLS…RTRQQYLQDL (219 aa). Positions 687 to 763 constitute a PDZ domain; sequence ELALPRDGQG…VCVTVLPPDE (77 aa). A phosphoserine mark is found at serine 817, serine 839, and serine 912. The segment at 830 to 903 is disordered; it reads EFLHSQNSLS…PAPELRASFL (74 aa). A compositionally biased stretch (low complexity) spans 832-845; the sequence is LHSQNSLSPRSSLS. Positions 946–980 are disordered; sequence LSREGQPIPESGDPKGTPKSDAEPEPGNLSEKVSH. The segment covering 957-967 has biased composition (basic and acidic residues); that stretch reads GDPKGTPKSDA. Residues 972–1034 adopt a coiled-coil conformation; sequence GNLSEKVSHL…TRLLLASKQL (63 aa).

In terms of assembly, interacts with RRP1B; the interaction leads to inhibition of SIPA1 GTPase activity. Expressed in fetal as well as in adult tissues. Expressed abundantly in the lymphoid tissues such as thymus, spleen and peripheral blood lymphocytes and also shows a significant expression in the spinal cord.

The protein resides in the nucleus. It is found in the cytoplasm. The protein localises to the perinuclear region. It localises to the endomembrane system. In terms of biological role, GTPase activator for the nuclear Ras-related regulatory proteins Rap1 and Rap2 in vitro, converting them to the putatively inactive GDP-bound state. Affects cell cycle progression. The polypeptide is Signal-induced proliferation-associated protein 1 (SIPA1) (Homo sapiens (Human)).